The sequence spans 770 residues: Rho guanine nucleotide exchange factor 38 (770 aa).

The tract at residues 33-88 (KTDTVVDSSVSGDHSGSLRRSQSDRTEYNQKLQEKMTPQAECSSAETPTPEDEQQV) is disordered. Thr34 carries the post-translational modification Phosphothreonine. Positions 37-47 (VVDSSVSGDHS) are enriched in low complexity. Basic and acidic residues predominate over residues 53 to 66 (SQSDRTEYNQKLQE). The DH domain maps to 94–285 (KRAKIIRELI…KDINVNINEL (192 aa)). Residues 327–542 (LKILTRGESQ…VHSLTFVKEN (216 aa)) form the BAR domain. SH3 domains are found at residues 581–644 (GAEE…PHNP) and 706–769 (VDEQ…KMTY).

May act as a guanine-nucleotide releasing factor. This is Rho guanine nucleotide exchange factor 38 (Arhgef38) from Mus musculus (Mouse).